We begin with the raw amino-acid sequence, 547 residues long: Phosphatidylinositol/phosphatidylcholine transfer protein SFH7 (547 aa).

One can recognise a CRAL-TRIO domain in the interval 130 to 304; that stretch reads EIDQVLKHYP…FFGGLCTCAD (175 aa). The stretch at 464-526 forms a coiled coil; it reads SSEYVIMVKR…KKALDETMVN (63 aa).

Belongs to the SFH family.

It is found in the golgi apparatus membrane. It localises to the cell membrane. In terms of biological role, required for transport of secretory proteins from the Golgi complex. Catalyzes the transfer of phosphatidylinositol and phosphatidylcholine between membranes in vitro. In Arabidopsis thaliana (Mouse-ear cress), this protein is Phosphatidylinositol/phosphatidylcholine transfer protein SFH7 (SFH7).